The primary structure comprises 205 residues: GTP cyclohydrolase-2 (205 aa).

49 to 53 provides a ligand contact to GTP; that stretch reads RIHSE. Residues cysteine 54, cysteine 65, and cysteine 67 each coordinate Zn(2+). GTP contacts are provided by residues glutamine 70, 92 to 94, and threonine 114; that span reads EGR. Catalysis depends on aspartate 126, which acts as the Proton acceptor. The Nucleophile role is filled by arginine 128. Residues threonine 149 and lysine 154 each coordinate GTP.

The protein belongs to the GTP cyclohydrolase II family. Zn(2+) serves as cofactor.

It catalyses the reaction GTP + 4 H2O = 2,5-diamino-6-hydroxy-4-(5-phosphoribosylamino)-pyrimidine + formate + 2 phosphate + 3 H(+). It functions in the pathway cofactor biosynthesis; riboflavin biosynthesis; 5-amino-6-(D-ribitylamino)uracil from GTP: step 1/4. Functionally, catalyzes the conversion of GTP to 2,5-diamino-6-ribosylamino-4(3H)-pyrimidinone 5'-phosphate (DARP), formate and pyrophosphate. This Shewanella woodyi (strain ATCC 51908 / MS32) protein is GTP cyclohydrolase-2.